The following is a 58-amino-acid chain: MKTIKVTQTKSSSHRLKNHKLCLQGLGLRRIGHTVEVQDTPSNRGMINKVYYMVSVEE.

It belongs to the universal ribosomal protein uL30 family. Part of the 50S ribosomal subunit.

The polypeptide is Large ribosomal subunit protein uL30 (Acinetobacter baumannii (strain AB307-0294)).